The following is a 417-amino-acid chain: XO lethal protein 1 (417 aa).

Positions 373–417 (VSPGETSSEGISDEHHYEEYDEDDIMEEEEAPSARQDDTYDEDEE) are disordered. The segment covering 391 to 403 (EYDEDDIMEEEEA) has biased composition (acidic residues).

Belongs to the GHMP kinase family. Xol-1 subfamily.

Its subcellular location is the nucleus. Functionally, sex-determining factor that is required for sexual differentiation and X chromosome dosage compensation to promote male development. High expression during gastrulation triggers male development, while low expression at that time triggers hermaphrodite development. Although related to GHMP kinase, its mode of action remains unclear. This Caenorhabditis elegans protein is XO lethal protein 1.